A 161-amino-acid chain; its full sequence is Phosphopantetheine adenylyltransferase (161 aa).

Residue T10 coordinates substrate. Residues 10–11 and H18 each bind ATP; that span reads TF. Residues K42, M74, and R88 each coordinate substrate. ATP contacts are provided by residues 89–91, E99, and 124–130; these read GLR and WSFISSS.

Belongs to the bacterial CoaD family. Homohexamer. The cofactor is Mg(2+).

The protein resides in the cytoplasm. The enzyme catalyses (R)-4'-phosphopantetheine + ATP + H(+) = 3'-dephospho-CoA + diphosphate. The protein operates within cofactor biosynthesis; coenzyme A biosynthesis; CoA from (R)-pantothenate: step 4/5. Its function is as follows. Reversibly transfers an adenylyl group from ATP to 4'-phosphopantetheine, yielding dephospho-CoA (dPCoA) and pyrophosphate. The polypeptide is Phosphopantetheine adenylyltransferase (Serratia proteamaculans (strain 568)).